A 963-amino-acid polypeptide reads, in one-letter code: Translation initiation factor IF-2 (963 aa).

Basic and acidic residues predominate over residues 53-77 (SHGQADDSARKKITLTKRETSEIRQ). Positions 53–377 (SHGQADDSAR…RSNFQAPTEP (325 aa)) are disordered. Polar residues predominate over residues 78–87 (SDATGKTRTV). 4 stretches are compositionally biased toward basic and acidic residues: residues 98–110 (IKRD…HQAD), 123–183 (EEAR…KAEE), 197–250 (DTSR…EAEA), and 267–278 (PSERKAEEKKAE). The segment covering 343-356 (SSGGVGGWRGGPRG) has biased composition (gly residues). In terms of domain architecture, tr-type G spans 463 to 632 (PRPPVVTVMG…SLQAEVLELK (170 aa)). The segment at 472-479 (GHVDHGKT) is G1. A GTP-binding site is contributed by 472–479 (GHVDHGKT). The interval 497–501 (GITQH) is G2. A G3 region spans residues 518-521 (DTPG). GTP is bound by residues 518–522 (DTPGH) and 572–575 (NKVD). The interval 572–575 (NKVD) is G4. The interval 608–610 (SAK) is G5.

It belongs to the TRAFAC class translation factor GTPase superfamily. Classic translation factor GTPase family. IF-2 subfamily.

Its subcellular location is the cytoplasm. Functionally, one of the essential components for the initiation of protein synthesis. Protects formylmethionyl-tRNA from spontaneous hydrolysis and promotes its binding to the 30S ribosomal subunits. Also involved in the hydrolysis of GTP during the formation of the 70S ribosomal complex. The protein is Translation initiation factor IF-2 of Cupriavidus taiwanensis (strain DSM 17343 / BCRC 17206 / CCUG 44338 / CIP 107171 / LMG 19424 / R1) (Ralstonia taiwanensis (strain LMG 19424)).